Consider the following 405-residue polypeptide: Argininosuccinate synthase (405 aa).

ATP is bound at residue 11–19 (AYSGGLDTS). Tyrosine 90 is a binding site for L-citrulline. Glycine 119 contributes to the ATP binding site. L-aspartate-binding residues include threonine 121, asparagine 125, and aspartate 126. L-citrulline is bound at residue asparagine 125. Residues arginine 129, serine 178, serine 187, glutamate 263, and tyrosine 275 each contribute to the L-citrulline site.

Belongs to the argininosuccinate synthase family. Type 1 subfamily. In terms of assembly, homotetramer.

The protein resides in the cytoplasm. The enzyme catalyses L-citrulline + L-aspartate + ATP = 2-(N(omega)-L-arginino)succinate + AMP + diphosphate + H(+). The protein operates within amino-acid biosynthesis; L-arginine biosynthesis; L-arginine from L-ornithine and carbamoyl phosphate: step 2/3. This Legionella pneumophila (strain Corby) protein is Argininosuccinate synthase.